The following is a 140-amino-acid chain: Transcription antitermination protein NusB (140 aa).

It belongs to the NusB family.

Its function is as follows. Involved in transcription antitermination. Required for transcription of ribosomal RNA (rRNA) genes. Binds specifically to the boxA antiterminator sequence of the ribosomal RNA (rrn) operons. The protein is Transcription antitermination protein NusB of Pseudoalteromonas atlantica (strain T6c / ATCC BAA-1087).